The chain runs to 411 residues: Dual-specificity RNA methyltransferase RlmN (411 aa).

Glu125 serves as the catalytic Proton acceptor. Residues 131–380 enclose the Radical SAM core domain; sequence EEGRGTLCIS…IRTPRGRDIL (250 aa). A disulfide bridge connects residues Cys138 and Cys383. Positions 145, 149, and 152 each coordinate [4Fe-4S] cluster. S-adenosyl-L-methionine-binding positions include 209–210, Ser241, 263–265, and Asn340; these read GE and SLH. The active-site S-methylcysteine intermediate is the Cys383.

The protein belongs to the radical SAM superfamily. RlmN family. The cofactor is [4Fe-4S] cluster.

Its subcellular location is the cytoplasm. It carries out the reaction adenosine(2503) in 23S rRNA + 2 reduced [2Fe-2S]-[ferredoxin] + 2 S-adenosyl-L-methionine = 2-methyladenosine(2503) in 23S rRNA + 5'-deoxyadenosine + L-methionine + 2 oxidized [2Fe-2S]-[ferredoxin] + S-adenosyl-L-homocysteine. It catalyses the reaction adenosine(37) in tRNA + 2 reduced [2Fe-2S]-[ferredoxin] + 2 S-adenosyl-L-methionine = 2-methyladenosine(37) in tRNA + 5'-deoxyadenosine + L-methionine + 2 oxidized [2Fe-2S]-[ferredoxin] + S-adenosyl-L-homocysteine. Functionally, specifically methylates position 2 of adenine 2503 in 23S rRNA and position 2 of adenine 37 in tRNAs. m2A2503 modification seems to play a crucial role in the proofreading step occurring at the peptidyl transferase center and thus would serve to optimize ribosomal fidelity. This chain is Dual-specificity RNA methyltransferase RlmN, found in Brucella suis biovar 1 (strain 1330).